The following is a 178-amino-acid chain: Nucleoside triphosphate/diphosphate phosphatase (178 aa).

Arginine 23 serves as the catalytic Proton donor. Asparagine 87, aspartate 103, aspartate 105, aspartate 107, aspartate 120, and glutamate 123 together coordinate Mg(2+).

Belongs to the Ntdp family. Mg(2+) serves as cofactor.

The catalysed reaction is a ribonucleoside 5'-triphosphate + H2O = a ribonucleoside 5'-diphosphate + phosphate + H(+). It catalyses the reaction a ribonucleoside 5'-diphosphate + H2O = a ribonucleoside 5'-phosphate + phosphate + H(+). Has nucleoside phosphatase activity towards nucleoside triphosphates and nucleoside diphosphates. This chain is Nucleoside triphosphate/diphosphate phosphatase, found in Latilactobacillus sakei subsp. sakei (strain 23K) (Lactobacillus sakei subsp. sakei).